The primary structure comprises 333 residues: Eukaryotic translation initiation factor 3 subunit I (333 aa).

WD repeat units follow at residues G8 to T47, G50 to K91, C144 to N183, and E186 to T225. A Phosphothreonine modification is found at T219. The residue at position 264 (K264) is an N6-acetyllysine. K282 is covalently cross-linked (Glycyl lysine isopeptide (Lys-Gly) (interchain with G-Cter in ubiquitin)). One copy of the WD 5 repeat lies at G283–E324. At Y308 the chain carries Phosphotyrosine.

Belongs to the eIF-3 subunit I family. Component of the eukaryotic translation initiation factor 3 (eIF-3) complex, which is composed of 13 subunits: EIF3A, EIF3B, EIF3C, EIF3D, EIF3E, EIF3F, EIF3G, EIF3H, EIF3I, EIF3J, EIF3K, EIF3L and EIF3M. The eIF-3 complex appears to include 3 stable modules: module A is composed of EIF3A, EIF3B, EIF3G and EIF3I; module B is composed of EIF3F, EIF3H, and EIF3M; and module C is composed of EIF3C, EIF3D, EIF3E, EIF3K and EIF3L. EIF3C of module C binds EIF3B of module A and EIF3H of module B, thereby linking the three modules. EIF3J is a labile subunit that binds to the eIF-3 complex via EIF3B. The eIF-3 complex interacts with RPS6KB1 under conditions of nutrient depletion. Mitogenic stimulation leads to binding and activation of a complex composed of MTOR and RPTOR, leading to phosphorylation and release of RPS6KB1 and binding of EIF4B to eIF-3. Phosphorylated by TGF-beta type II receptor.

It is found in the cytoplasm. Its function is as follows. Component of the eukaryotic translation initiation factor 3 (eIF-3) complex, which is required for several steps in the initiation of protein synthesis. The eIF-3 complex associates with the 40S ribosome and facilitates the recruitment of eIF-1, eIF-1A, eIF-2:GTP:methionyl-tRNAi and eIF-5 to form the 43S pre-initiation complex (43S PIC). The eIF-3 complex stimulates mRNA recruitment to the 43S PIC and scanning of the mRNA for AUG recognition. The eIF-3 complex is also required for disassembly and recycling of post-termination ribosomal complexes and subsequently prevents premature joining of the 40S and 60S ribosomal subunits prior to initiation. The eIF-3 complex specifically targets and initiates translation of a subset of mRNAs involved in cell proliferation, including cell cycling, differentiation and apoptosis, and uses different modes of RNA stem-loop binding to exert either translational activation or repression. This chain is Eukaryotic translation initiation factor 3 subunit I, found in Oryctolagus cuniculus (Rabbit).